We begin with the raw amino-acid sequence, 184 residues long: Holliday junction branch migration complex subunit RuvA (184 aa).

Positions 1–64 (MIKAIEGIIT…EDANLLYGFI (64 aa)) are domain I. A domain II region spans residues 65–137 (KESEQRIFEM…LSDAKFGEIN (73 aa)). Residue asparagine 137 is a region of interest, flexible linker. The interval 138-184 (SMPSYQNEAFMALESLGFKRDRISKVLNECSSNDTASLIKEALKKLA) is domain III.

The protein belongs to the RuvA family. As to quaternary structure, homotetramer. Forms an RuvA(8)-RuvB(12)-Holliday junction (HJ) complex. HJ DNA is sandwiched between 2 RuvA tetramers; dsDNA enters through RuvA and exits via RuvB. An RuvB hexamer assembles on each DNA strand where it exits the tetramer. Each RuvB hexamer is contacted by two RuvA subunits (via domain III) on 2 adjacent RuvB subunits; this complex drives branch migration. In the full resolvosome a probable DNA-RuvA(4)-RuvB(12)-RuvC(2) complex forms which resolves the HJ.

The protein resides in the cytoplasm. In terms of biological role, the RuvA-RuvB-RuvC complex processes Holliday junction (HJ) DNA during genetic recombination and DNA repair, while the RuvA-RuvB complex plays an important role in the rescue of blocked DNA replication forks via replication fork reversal (RFR). RuvA specifically binds to HJ cruciform DNA, conferring on it an open structure. The RuvB hexamer acts as an ATP-dependent pump, pulling dsDNA into and through the RuvAB complex. HJ branch migration allows RuvC to scan DNA until it finds its consensus sequence, where it cleaves and resolves the cruciform DNA. This chain is Holliday junction branch migration complex subunit RuvA, found in Campylobacter fetus subsp. fetus (strain 82-40).